The sequence spans 412 residues: Chorismate synthase (412 aa).

R40 and R46 together coordinate NADP(+). FMN-binding positions include 135–137 (RAS), 256–257 (QA), G300, 315–319 (KPIST), and R341. Positions 391-404 (QREPRQESSDEQPA) are enriched in basic and acidic residues. A disordered region spans residues 391–412 (QREPRQESSDEQPARRAANTAG).

Belongs to the chorismate synthase family. As to quaternary structure, homotetramer. FMNH2 serves as cofactor.

It catalyses the reaction 5-O-(1-carboxyvinyl)-3-phosphoshikimate = chorismate + phosphate. It participates in metabolic intermediate biosynthesis; chorismate biosynthesis; chorismate from D-erythrose 4-phosphate and phosphoenolpyruvate: step 7/7. Catalyzes the anti-1,4-elimination of the C-3 phosphate and the C-6 proR hydrogen from 5-enolpyruvylshikimate-3-phosphate (EPSP) to yield chorismate, which is the branch point compound that serves as the starting substrate for the three terminal pathways of aromatic amino acid biosynthesis. This reaction introduces a second double bond into the aromatic ring system. The polypeptide is Chorismate synthase (Mycobacteroides abscessus (strain ATCC 19977 / DSM 44196 / CCUG 20993 / CIP 104536 / JCM 13569 / NCTC 13031 / TMC 1543 / L948) (Mycobacterium abscessus)).